Consider the following 184-residue polypeptide: MDGFFWKTWLVVAALAIGGTSSLPHKPLTYEEAVDLAVSTYNGKSGEESLYRLLEAVPPPKWDPLSESNQELNLTIKETVCLVAEERSLEECDFQDDGAVMGCTGYFFFGESPPVLVLTCEPLGEDEEQNQEEEEEEEKEEDEKDQPRRVKRFKKFFRKLKKSVKKRVKKFFKKPRVIGVTIPF.

An N-terminal signal peptide occupies residues 1 to 22 (MDGFFWKTWLVVAALAIGGTSS). Residues 23 to 150 (LPHKPLTYEE…EDEKDQPRRV (128 aa)) constitute a propeptide that is removed on maturation. 2 disulfide bridges follow: Cys-81–Cys-92 and Cys-103–Cys-120. Positions 125-144 (EDEEQNQEEEEEEEKEEDEK) are enriched in acidic residues. A disordered region spans residues 125 to 147 (EDEEQNQEEEEEEEKEEDEKDQP).

It belongs to the cathelicidin family. Expressed by the venom gland.

It localises to the secreted. It is found in the target cell membrane. Functionally, potent antimicrobial peptide against most of Gram-negative bacteria, some Gram-positive bacteria (Bacillus) and some fungi (C.albicans, P.pastoris, A.terreus, A.nidulans, and C.globosum). Adopts an amphipathic alpha helical conformation, that may allow to partition into the target membrane. No hemolytic and cytotoxic activities have been observed on mammalian cells. This chain is Cathelicidin-related peptide Pt_CRAMP2, found in Pseudonaja textilis (Eastern brown snake).